Consider the following 354-residue polypeptide: DNA polymerase IV (354 aa).

The 186-residue stretch at 3–188 folds into the UmuC domain; sequence VIFVDFDYFF…LDIDEIPGIG (186 aa). Residues Asp-7 and Asp-105 each coordinate Mg(2+). The active site involves Glu-106.

It belongs to the DNA polymerase type-Y family. Monomer. Mg(2+) serves as cofactor.

The protein localises to the cytoplasm. It catalyses the reaction DNA(n) + a 2'-deoxyribonucleoside 5'-triphosphate = DNA(n+1) + diphosphate. Poorly processive, error-prone DNA polymerase involved in untargeted mutagenesis. Copies undamaged DNA at stalled replication forks, which arise in vivo from mismatched or misaligned primer ends. These misaligned primers can be extended by PolIV. Exhibits no 3'-5' exonuclease (proofreading) activity. May be involved in translesional synthesis. In Sulfolobus acidocaldarius (strain ATCC 33909 / DSM 639 / JCM 8929 / NBRC 15157 / NCIMB 11770), this protein is DNA polymerase IV.